We begin with the raw amino-acid sequence, 494 residues long: Alpha-amylase-related protein (494 aa).

The N-terminal stretch at 1 to 20 (MFKFALALTLCLAGASLSLA) is a signal peptide. Gln21 bears the Pyrrolidone carboxylic acid mark. Cys48 and Cys104 are disulfide-bonded. The Ca(2+) site is built by Asn118, Gln169, and Asp178. Cys157 and Cys171 are oxidised to a cystine. A chloride-binding site is contributed by Arg206. Asp208 functions as the Nucleophile in the catalytic mechanism. Residue His212 coordinates Ca(2+). Glu245 functions as the Proton donor in the catalytic mechanism. Residues Asn308 and Arg343 each coordinate chloride. Cystine bridges form between Cys376–Cys382, Cys418–Cys441, and Cys448–Cys460.

Belongs to the glycosyl hydrolase 13 family. Monomer. Ca(2+) serves as cofactor. Chloride is required as a cofactor.

Its subcellular location is the secreted. The catalysed reaction is Endohydrolysis of (1-&gt;4)-alpha-D-glucosidic linkages in polysaccharides containing three or more (1-&gt;4)-alpha-linked D-glucose units.. In Drosophila dossoui (Fruit fly), this protein is Alpha-amylase-related protein (Amyrel).